The following is a 1559-amino-acid chain: Arginine-glutamic acid dipeptide repeats protein (1559 aa).

Residues 1 to 36 (MTADKDKDKDKEKDRDRDRDRERDKRDKARESENAR) show a composition bias toward basic and acidic residues. The interval 1–89 (MTADKDKDKD…KKKSRYERTD (89 aa)) is disordered. A phosphoserine mark is found at Ser-53 and Ser-56. Over residues 73 to 84 (KSRKKPPKKKSR) the composition is skewed to basic residues. A BAH domain is found at 102–282 (VVYRPGDCVY…PETRRLNSTQ (181 aa)). Thr-119 is modified (phosphothreonine). Ser-141 and Ser-303 each carry phosphoserine. The ELM2 domain occupies 283-386 (GEIRVGPSHQ…KALQRLVKKP (104 aa)). Positions 390 to 442 (LIEKCWTEDEVKRFVKGLRQYGKNFFRIRKELLPNKETGELITFYYYWKKTPE) constitute an SANT domain. The disordered stretch occupies residues 463 to 494 (TRTASTPVNTPSRPPSSEFLDLSSASEDDFDS). The span at 464 to 473 (RTASTPVNTP) shows a compositional bias: polar residues. The span at 478-487 (SSEFLDLSSA) shows a compositional bias: low complexity. Residues 507–532 (RHCFTTTSKDWHHGGRENILLCTDCR) form a GATA-type zinc finger. Residues 541-1125 (LPPIEKPVDP…PSHASQSARF (585 aa)) are disordered. Lys-559 participates in a covalent cross-link: Glycyl lysine isopeptide (Lys-Gly) (interchain with G-Cter in SUMO2). 3 positions are modified to phosphoserine: Ser-593, Ser-599, and Ser-612. Low complexity predominate over residues 608–622 (SGRNSPSAASTSSND). Residues 623 to 639 (SKAEAVKKSAKKVKEEA) show a composition bias toward basic and acidic residues. A Glycyl lysine isopeptide (Lys-Gly) (interchain with G-Cter in SUMO2) cross-link involves residue Lys-636. Residues Ser-641, Ser-655, Ser-674, and Ser-678 each carry the phosphoserine modification. Basic and acidic residues predominate over residues 651-672 (EKVASDTEDTDRATSKKTKTQE). A compositionally biased stretch (basic and acidic residues) spans 687 to 707 (SDSRSVNDEGSSDPKDIDQDN). Residues 708–735 (RSTSPSIPSPQDNESDSDSSAQQQMLQT) show a composition bias toward polar residues. Over residues 736-761 (QPPALQAPSGAASAPSTAPPGTTQLP) the composition is skewed to low complexity. Polar residues predominate over residues 768 to 791 (SATTVPPQGSPATSQPPNQTQSTV). Residues 805-822 (LHPPRLPSPHPPLQPMTA) are compositionally biased toward pro residues. Over residues 890–900 (QLPASQSALQP) the composition is skewed to low complexity. The span at 901–931 (QQPPREQPLPPAPLAMPHIKPPPTTPIPQLP) shows a compositional bias: pro residues. Residues 961-971 (KPLSSLSTHHP) show a composition bias toward low complexity. The span at 1027-1053 (PQHPFVPGGPPPITPPSCPPTSTPPAG) shows a compositional bias: pro residues. The span at 1054 to 1068 (PSSSSQPPCSAAVSS) shows a compositional bias: low complexity. Residues Ser-1098, Ser-1105, and Ser-1107 each carry the phosphoserine modification. Pro residues predominate over residues 1098 to 1109 (SPPPPPRSPSPE). The residue at position 1111 (Thr-1111) is a Phosphothreonine. Residues 1148–1205 (GSKLAKKREEAIEKAKREAEQKAREEREREKEKEKEREREREREREAERAAQKASSSA) adopt a coiled-coil conformation. At Lys-1150 the chain carries N6-acetyllysine. Residues 1154 to 1198 (KREEAIEKAKREAEQKAREEREREKEKEKEREREREREREAERAA) show a composition bias toward basic and acidic residues. Positions 1154–1239 (KREEAIEKAK…TTIAAVPPYI (86 aa)) are disordered. Tyr-1252 is subject to Phosphotyrosine. A Phosphoserine modification is found at Ser-1259.

As to quaternary structure, interacts with HDAC1 and ATN1. Interaction with ATN1 is improved when the poly-Gln region of ATN1 is extended. As to expression, widely expressed.

It localises to the nucleus. The protein resides in the PML body. Its function is as follows. Plays a role as a transcriptional repressor during development. May play a role in the control of cell survival. Interacts with FAT1. This Rattus norvegicus (Rat) protein is Arginine-glutamic acid dipeptide repeats protein (Rere).